The primary structure comprises 330 residues: Ketol-acid reductoisomerase (NADP(+)) (330 aa).

The KARI N-terminal Rossmann domain maps to 1–182 (MKKVYYDQDA…GCTRAGVFET (182 aa)). NADP(+) is bound by residues 25–28 (YGSQ), serine 51, serine 53, and 83–86 (DQIQ). Histidine 108 is an active-site residue. Glycine 134 provides a ligand contact to NADP(+). The KARI C-terminal knotted domain maps to 183-328 (TFKEETETDL…AELRQMMPWL (146 aa)). Residues aspartate 191, glutamate 195, glutamate 227, and glutamate 231 each coordinate Mg(2+). Serine 252 contributes to the substrate binding site.

This sequence belongs to the ketol-acid reductoisomerase family. The cofactor is Mg(2+).

It catalyses the reaction (2R)-2,3-dihydroxy-3-methylbutanoate + NADP(+) = (2S)-2-acetolactate + NADPH + H(+). It carries out the reaction (2R,3R)-2,3-dihydroxy-3-methylpentanoate + NADP(+) = (S)-2-ethyl-2-hydroxy-3-oxobutanoate + NADPH + H(+). Its pathway is amino-acid biosynthesis; L-isoleucine biosynthesis; L-isoleucine from 2-oxobutanoate: step 2/4. It functions in the pathway amino-acid biosynthesis; L-valine biosynthesis; L-valine from pyruvate: step 2/4. In terms of biological role, involved in the biosynthesis of branched-chain amino acids (BCAA). Catalyzes an alkyl-migration followed by a ketol-acid reduction of (S)-2-acetolactate (S2AL) to yield (R)-2,3-dihydroxy-isovalerate. In the isomerase reaction, S2AL is rearranged via a Mg-dependent methyl migration to produce 3-hydroxy-3-methyl-2-ketobutyrate (HMKB). In the reductase reaction, this 2-ketoacid undergoes a metal-dependent reduction by NADPH to yield (R)-2,3-dihydroxy-isovalerate. This chain is Ketol-acid reductoisomerase (NADP(+)), found in Carboxydothermus hydrogenoformans (strain ATCC BAA-161 / DSM 6008 / Z-2901).